Consider the following 505-residue polypeptide: Lysine--tRNA ligase (505 aa).

Mg(2+)-binding residues include E415 and E422.

Belongs to the class-II aminoacyl-tRNA synthetase family. In terms of assembly, homodimer. Mg(2+) is required as a cofactor.

Its subcellular location is the cytoplasm. The catalysed reaction is tRNA(Lys) + L-lysine + ATP = L-lysyl-tRNA(Lys) + AMP + diphosphate. This Xanthomonas campestris pv. campestris (strain 8004) protein is Lysine--tRNA ligase.